We begin with the raw amino-acid sequence, 232 residues long: Ashwin (232 aa).

Residues Ser-112, Ser-182, Ser-184, Ser-189, and Ser-193 each carry the phosphoserine modification. The segment at 163–232 (KMEHNNNDTQ…KRKIQHVTWP (70 aa)) is disordered. Phosphothreonine occurs at positions 197 and 198. The segment covering 206 to 224 (APKEEAEATNHLKPPEVKR) has biased composition (basic and acidic residues).

This sequence belongs to the ashwin family. As to quaternary structure, component of the tRNA-splicing ligase complex.

It localises to the nucleus. The polypeptide is Ashwin (Mus musculus (Mouse)).